The following is a 205-amino-acid chain: Small ribosomal subunit protein uS3c (205 aa).

Positions 37–106 constitute a KH type-2 domain; that stretch reads IRQLLRDYVL…TWRISLVEVS (70 aa).

This sequence belongs to the universal ribosomal protein uS3 family. As to quaternary structure, part of the 30S ribosomal subunit.

Its subcellular location is the plastid. The protein resides in the chloroplast. The protein is Small ribosomal subunit protein uS3c (rps3) of Cyanidioschyzon merolae (strain NIES-3377 / 10D) (Unicellular red alga).